Here is an 893-residue protein sequence, read N- to C-terminus: DNA mismatch repair protein MutS (893 aa).

Residue 631–638 (GPNMAGKS) coordinates ATP. Residues 821–858 (AGRPRVAVRQPQGGRRGASTGQLGLFGMEPAQGGTGVT) form a disordered region.

It belongs to the DNA mismatch repair MutS family.

In terms of biological role, this protein is involved in the repair of mismatches in DNA. It is possible that it carries out the mismatch recognition step. This protein has a weak ATPase activity. In Myxococcus xanthus (strain DK1622), this protein is DNA mismatch repair protein MutS.